Here is a 107-residue protein sequence, read N- to C-terminus: Thiosulfate sulfurtransferase GlpE (107 aa).

The 89-residue stretch at 16–104 (KKRDIVIADV…WKAHHPTSDA (89 aa)) folds into the Rhodanese domain. The active-site Cysteine persulfide intermediate is Cys64.

This sequence belongs to the GlpE family.

It localises to the cytoplasm. The catalysed reaction is thiosulfate + hydrogen cyanide = thiocyanate + sulfite + 2 H(+). It carries out the reaction thiosulfate + [thioredoxin]-dithiol = [thioredoxin]-disulfide + hydrogen sulfide + sulfite + 2 H(+). Functionally, transferase that catalyzes the transfer of sulfur from thiosulfate to thiophilic acceptors such as cyanide or dithiols. May function in a CysM-independent thiosulfate assimilation pathway by catalyzing the conversion of thiosulfate to sulfite, which can then be used for L-cysteine biosynthesis. In Coxiella burnetii (strain CbuK_Q154) (Coxiella burnetii (strain Q154)), this protein is Thiosulfate sulfurtransferase GlpE.